The following is a 94-amino-acid chain: Co-chaperonin GroES (94 aa).

This sequence belongs to the GroES chaperonin family. Heptamer of 7 subunits arranged in a ring. Interacts with the chaperonin GroEL.

The protein localises to the cytoplasm. Together with the chaperonin GroEL, plays an essential role in assisting protein folding. The GroEL-GroES system forms a nano-cage that allows encapsulation of the non-native substrate proteins and provides a physical environment optimized to promote and accelerate protein folding. GroES binds to the apical surface of the GroEL ring, thereby capping the opening of the GroEL channel. This is Co-chaperonin GroES from Staphylococcus epidermidis.